The chain runs to 284 residues: UDP-N-acetylenolpyruvoylglucosamine reductase (284 aa).

Residues Lys-21–Ala-180 form the FAD-binding PCMH-type domain. Residue Arg-159 is part of the active site. The Proton donor role is filled by Ser-209. The active site involves Glu-280.

The protein belongs to the MurB family. Requires FAD as cofactor.

It is found in the cytoplasm. It catalyses the reaction UDP-N-acetyl-alpha-D-muramate + NADP(+) = UDP-N-acetyl-3-O-(1-carboxyvinyl)-alpha-D-glucosamine + NADPH + H(+). The protein operates within cell wall biogenesis; peptidoglycan biosynthesis. Cell wall formation. The polypeptide is UDP-N-acetylenolpyruvoylglucosamine reductase (Pseudothermotoga lettingae (strain ATCC BAA-301 / DSM 14385 / NBRC 107922 / TMO) (Thermotoga lettingae)).